Here is a 171-residue protein sequence, read N- to C-terminus: Ribosome maturation factor RimM (171 aa).

One can recognise a PRC barrel domain in the interval 93 to 167 (DGVYYYKDIF…KVYVELMEGL (75 aa)).

It belongs to the RimM family. As to quaternary structure, binds ribosomal protein uS19.

The protein localises to the cytoplasm. An accessory protein needed during the final step in the assembly of 30S ribosomal subunit, possibly for assembly of the head region. Essential for efficient processing of 16S rRNA. May be needed both before and after RbfA during the maturation of 16S rRNA. It has affinity for free ribosomal 30S subunits but not for 70S ribosomes. The protein is Ribosome maturation factor RimM of Lactobacillus helveticus (strain DPC 4571).